Consider the following 45-residue polypeptide: DVCDSLVEGRCIHNGCWCDEEAPHGNCCDTAGCTAWWWCPGTKWD.

4 cysteine pairs are disulfide-bonded: cysteine 3/cysteine 16, cysteine 11/cysteine 28, cysteine 18/cysteine 33, and cysteine 27/cysteine 39. Residue tryptophan 17 is modified to 6'-bromotryptophan. 4-carboxyglutamate is present on glutamate 21. At proline 23 the chain carries 4-hydroxyproline. 6'-bromotryptophan occurs at positions 37 and 38. Proline 40 bears the 4-hydroxyproline mark. 6'-bromotryptophan is present on tryptophan 44.

As to expression, expressed by the venom duct.

The protein localises to the secreted. Mu-conotoxins block voltage-gated sodium channels. This toxin reversibly blocks voltage-gated sodium channel in cephalopods, with no alteration in the voltage dependence of sodium conductance or on the kinetics of inactivation. The polypeptide is Mu-conotoxin-like Cal 12.1.1d (Californiconus californicus (California cone)).